The primary structure comprises 160 residues: Protein YpjC (160 aa).

This chain is Protein YpjC (ypjC), found in Escherichia coli (strain K12).